Consider the following 101-residue polypeptide: NAD(P)H-quinone oxidoreductase subunit 4L, chloroplastic (101 aa).

Transmembrane regions (helical) follow at residues 2–22, 32–52, and 61–81; these read ILEH…YGLI, MCLE…SDFF, and IFCI…LAIV.

It belongs to the complex I subunit 4L family. NDH is composed of at least 16 different subunits, 5 of which are encoded in the nucleus.

The protein resides in the plastid. It localises to the chloroplast thylakoid membrane. It carries out the reaction a plastoquinone + NADH + (n+1) H(+)(in) = a plastoquinol + NAD(+) + n H(+)(out). The enzyme catalyses a plastoquinone + NADPH + (n+1) H(+)(in) = a plastoquinol + NADP(+) + n H(+)(out). In terms of biological role, NDH shuttles electrons from NAD(P)H:plastoquinone, via FMN and iron-sulfur (Fe-S) centers, to quinones in the photosynthetic chain and possibly in a chloroplast respiratory chain. The immediate electron acceptor for the enzyme in this species is believed to be plastoquinone. Couples the redox reaction to proton translocation, and thus conserves the redox energy in a proton gradient. This chain is NAD(P)H-quinone oxidoreductase subunit 4L, chloroplastic, found in Arabis hirsuta (Hairy rock-cress).